The sequence spans 287 residues: Large ribosomal subunit protein uL2 (287 aa).

Disordered regions lie at residues 25–57 (TKTE…RGGG) and 203–287 (LSAG…GRES). 2 stretches are compositionally biased toward basic residues: residues 209 to 220 (GRNRWKGRRPKV) and 259 to 287 (TRNR…GRES).

The protein belongs to the universal ribosomal protein uL2 family. Part of the 50S ribosomal subunit. Forms a bridge to the 30S subunit in the 70S ribosome.

Functionally, one of the primary rRNA binding proteins. Required for association of the 30S and 50S subunits to form the 70S ribosome, for tRNA binding and peptide bond formation. It has been suggested to have peptidyltransferase activity; this is somewhat controversial. Makes several contacts with the 16S rRNA in the 70S ribosome. The sequence is that of Large ribosomal subunit protein uL2 from Nostoc punctiforme (strain ATCC 29133 / PCC 73102).